The chain runs to 291 residues: Elongation factor Ts (291 aa).

The interval 79 to 82 (TDFV) is involved in Mg(2+) ion dislocation from EF-Tu.

This sequence belongs to the EF-Ts family.

Its subcellular location is the cytoplasm. In terms of biological role, associates with the EF-Tu.GDP complex and induces the exchange of GDP to GTP. It remains bound to the aminoacyl-tRNA.EF-Tu.GTP complex up to the GTP hydrolysis stage on the ribosome. This is Elongation factor Ts from Ruegeria pomeroyi (strain ATCC 700808 / DSM 15171 / DSS-3) (Silicibacter pomeroyi).